The following is a 573-amino-acid chain: Poly(ribitol-phosphate) beta-N-acetylglucosaminyltransferase TarS (573 aa).

UDP-N-acetyl-alpha-D-glucosamine contacts are provided by residues proline 9, aspartate 41, asparagine 68, arginine 76, 92 to 94 (DSD), arginine 127, and glutamate 178. Mn(2+) is bound at residue aspartate 94. Residue aspartate 179 is the Proton acceptor of the active site. UDP-N-acetyl-alpha-D-glucosamine-binding positions include arginine 207 and 211–213 (HMS).

It belongs to the glycosyltransferase 2 family. As to quaternary structure, homotrimer. Mn(2+) is required as a cofactor.

It carries out the reaction 4-O-[(D-ribitylphospho)(n)-di{(2R)-glycerylphospho}]-N-acetyl-beta-D-mannosaminyl-(1-&gt;4)-N-acetyl-alpha-D-glucosaminyl di-trans,octa-cis-undecaprenyl diphosphate + n UDP-N-acetyl-alpha-D-glucosamine = 4-O-([2-N-acetyl-beta-D-glucosaminyl-1-D-ribitylphospho](n)-di{[2R]-1-glycerylphospho})-N-acetyl-beta-D-mannosaminyl-(1-&gt;4)-N-acetyl-alpha-D-glucosaminyl di-trans,octa-cis-undecaprenyl diphosphate + n UDP + n H(+). The protein operates within cell wall biogenesis; poly(ribitol phosphate) teichoic acid biosynthesis. Attaches beta-O-GlcNAc (beta-O-N-acetyl-D-glucosamine) residues to the C4 position of poly(RboP)-wall teichoic acids (WTAs). Mediates beta-lactam resistance in methicillin resistant Staphylococcus aureus (MRSA) strains. This is Poly(ribitol-phosphate) beta-N-acetylglucosaminyltransferase TarS from Staphylococcus aureus (strain Mu50 / ATCC 700699).